The chain runs to 150 residues: D-aminoacyl-tRNA deacylase (150 aa).

Positions 138–139 (GP) match the Gly-cisPro motif, important for rejection of L-amino acids motif.

The protein belongs to the DTD family. In terms of assembly, homodimer.

It is found in the cytoplasm. The enzyme catalyses glycyl-tRNA(Ala) + H2O = tRNA(Ala) + glycine + H(+). It carries out the reaction a D-aminoacyl-tRNA + H2O = a tRNA + a D-alpha-amino acid + H(+). Its function is as follows. An aminoacyl-tRNA editing enzyme that deacylates mischarged D-aminoacyl-tRNAs. Also deacylates mischarged glycyl-tRNA(Ala), protecting cells against glycine mischarging by AlaRS. Acts via tRNA-based rather than protein-based catalysis; rejects L-amino acids rather than detecting D-amino acids in the active site. By recycling D-aminoacyl-tRNA to D-amino acids and free tRNA molecules, this enzyme counteracts the toxicity associated with the formation of D-aminoacyl-tRNA entities in vivo and helps enforce protein L-homochirality. The chain is D-aminoacyl-tRNA deacylase from Chlorobium phaeobacteroides (strain DSM 266 / SMG 266 / 2430).